Here is a 397-residue protein sequence, read N- to C-terminus: G2/mitotic-specific cyclin-B1 (397 aa).

Belongs to the cyclin family. Cyclin AB subfamily. Interacts with the cdc2 protein kinase to form a serine/threonine kinase holoenzyme complex also known as maturation promoting factor (MPF). The cyclin subunit imparts substrate specificity to the complex. When not in a complex with cdc2, interacts with spdya. Interacts with nap1l1. Interacts with nanos1.

Its subcellular location is the cytoplasm. It localises to the cytoskeleton. It is found in the microtubule organizing center. The protein resides in the centrosome. The protein localises to the nucleus. In terms of biological role, essential for the control of the cell cycle at the G2/M (mitosis) transition. The chain is G2/mitotic-specific cyclin-B1 (ccnb1) from Xenopus laevis (African clawed frog).